A 173-amino-acid chain; its full sequence is Glutamyl-tRNA(Gln) amidotransferase subunit F, mitochondrial (173 aa).

The transit peptide at Met1 to Thr15 directs the protein to the mitochondrion.

Belongs to the GatF family. Subunit of the heterotrimeric GatFAB amidotransferase (AdT) complex, composed of A, B and F subunits.

The protein resides in the mitochondrion inner membrane. It catalyses the reaction L-glutamyl-tRNA(Gln) + L-glutamine + ATP + H2O = L-glutaminyl-tRNA(Gln) + L-glutamate + ADP + phosphate + H(+). Allows the formation of correctly charged Gln-tRNA(Gln) through the transamidation of misacylated Glu-tRNA(Gln) in the mitochondria. The reaction takes place in the presence of glutamine and ATP through an activated gamma-phospho-Glu-tRNA(Gln). Required for proper protein synthesis within the mitochondrion. The protein is Glutamyl-tRNA(Gln) amidotransferase subunit F, mitochondrial of Candida glabrata (strain ATCC 2001 / BCRC 20586 / JCM 3761 / NBRC 0622 / NRRL Y-65 / CBS 138) (Yeast).